Consider the following 85-residue polypeptide: ATP synthase subunit c (85 aa).

2 helical membrane-spanning segments follow: residues 10–30 and 65–85; these read GLAL…GAIG and AVAE…LLVV.

The protein belongs to the ATPase C chain family. As to quaternary structure, F-type ATPases have 2 components, F(1) - the catalytic core - and F(0) - the membrane proton channel. F(1) has five subunits: alpha(3), beta(3), gamma(1), delta(1), epsilon(1). F(0) has three main subunits: a(1), b(2) and c(10-14). The alpha and beta chains form an alternating ring which encloses part of the gamma chain. F(1) is attached to F(0) by a central stalk formed by the gamma and epsilon chains, while a peripheral stalk is formed by the delta and b chains.

Its subcellular location is the cell inner membrane. Functionally, f(1)F(0) ATP synthase produces ATP from ADP in the presence of a proton or sodium gradient. F-type ATPases consist of two structural domains, F(1) containing the extramembraneous catalytic core and F(0) containing the membrane proton channel, linked together by a central stalk and a peripheral stalk. During catalysis, ATP synthesis in the catalytic domain of F(1) is coupled via a rotary mechanism of the central stalk subunits to proton translocation. Key component of the F(0) channel; it plays a direct role in translocation across the membrane. A homomeric c-ring of between 10-14 subunits forms the central stalk rotor element with the F(1) delta and epsilon subunits. This is ATP synthase subunit c from Thermotoga maritima (strain ATCC 43589 / DSM 3109 / JCM 10099 / NBRC 100826 / MSB8).